A 179-amino-acid polypeptide reads, in one-letter code: Large ribosomal subunit protein uL6 (179 aa).

The protein belongs to the universal ribosomal protein uL6 family. Part of the 50S ribosomal subunit.

Functionally, this protein binds to the 23S rRNA, and is important in its secondary structure. It is located near the subunit interface in the base of the L7/L12 stalk, and near the tRNA binding site of the peptidyltransferase center. In Alkaliphilus metalliredigens (strain QYMF), this protein is Large ribosomal subunit protein uL6.